Here is a 481-residue protein sequence, read N- to C-terminus: Aspartyl/glutamyl-tRNA(Asn/Gln) amidotransferase subunit B (481 aa).

This sequence belongs to the GatB/GatE family. GatB subfamily. Heterotrimer of A, B and C subunits.

The enzyme catalyses L-glutamyl-tRNA(Gln) + L-glutamine + ATP + H2O = L-glutaminyl-tRNA(Gln) + L-glutamate + ADP + phosphate + H(+). It catalyses the reaction L-aspartyl-tRNA(Asn) + L-glutamine + ATP + H2O = L-asparaginyl-tRNA(Asn) + L-glutamate + ADP + phosphate + 2 H(+). Allows the formation of correctly charged Asn-tRNA(Asn) or Gln-tRNA(Gln) through the transamidation of misacylated Asp-tRNA(Asn) or Glu-tRNA(Gln) in organisms which lack either or both of asparaginyl-tRNA or glutaminyl-tRNA synthetases. The reaction takes place in the presence of glutamine and ATP through an activated phospho-Asp-tRNA(Asn) or phospho-Glu-tRNA(Gln). The polypeptide is Aspartyl/glutamyl-tRNA(Asn/Gln) amidotransferase subunit B (Prosthecochloris aestuarii (strain DSM 271 / SK 413)).